Here is an 841-residue protein sequence, read N- to C-terminus: MMARVRLAAALIPATAILSCLRTESWDPCVQVVPNISYQCMELNLYKIPDNIPISTKMLDLSFNYLRHLGSHNFSSFPELQVLDLSRCEIKIIEDDTFQGLNHLSTLILTGNPIQSLAWGAFSGLSSLQKLVAVETNLVSLNDFPIGHLKTLKELNVAHNFIHSFKLPEYFSNLPNLEHLDLSNNKIQNIYYEDVKVLHQMPLLNLSLDLSLNPLDFIEPGTFKEIKLNGLTLRSNFNSSHVMKTCIQGLAGLKINRLVLGEFKNERKLKGFDRSILEGLCNLTIEQFRIAYLDEFSGDDTDLFNCLENVSVISLLSVSLGSLQALLKDFRWQHLEIINCDFDKFPALKLSSLKKFVFTDNKDISSFTEFQLPSLQYLDLRRNHLSFKGCCSHADFGTTNLKHLDLSFNDVITLGSNFMGLEKLEHLDFQHSTLKQINAFSVFLSLRNLRYLDISYTNVRIVFHGIFTGLVSLKTLKMAGNTFQDNLLPDIFTELTNLTVLDLSKCQLEQVAQTAFHSLSSLQVLNMSHNKLLSLDTFLYEPLHLLRILDCSFNRIMDSKEQDLQNLPRNLTWLNLTQNAFACVCEHQRFLQWVKDQRQLLVGAEQMMCAEPLDMKDMPVLSFRNATCQMSKMIISVSVVTVLLVSVVGVLVYKFYFHLMLLAGCKKYGRGESTYGAFVIYSSQDEDWVRNELVKNLEEGVPPFQLCLHYRDFIPGVAIAANIIQEGFHKSRKVIVVVSQHFIQSRWCIFEYEIAQTWQFLSSRAGIIFIVLQKLEKSLLRQQVELYRLLSRNTYLEWEDSVLGRHVFWRRLRKALLAGKPQSPEGTADAETNPQEATTST.

The N-terminal stretch at Met1–Thr23 is a signal peptide. Residues Glu24–Lys632 are Extracellular-facing. An intrachain disulfide couples Cys29 to Cys40. 2 N-linked (GlcNAc...) asparagine glycosylation sites follow: Asn35 and Asn73. 7 LRR repeats span residues Ser55–Ser76, Glu79–Gly100, His103–Gly124, Ser127–His148, Thr151–Ser172, Asn176–Val197, and Asn205–Glu225. Asn205, Asn238, Asn282, and Asn309 each carry an N-linked (GlcNAc...) asparagine glycan. Cys281 and Cys306 are oxidised to a cystine. LRR repeat units follow at residues Ser352–Pro373, Ser374–Asp395, Asn400–Glu422, Lys423–Leu444, Asn448–Gly469, Ser472–Leu495, Asn497–Ser518, Ser521–Pro542, and Leu545–Pro568. Cys390 and Cys391 are disulfide-bonded. N-linked (GlcNAc...) asparagine glycans are attached at residues Asn497 and Asn526. N-linked (GlcNAc...) asparagine glycosylation is found at Asn570 and Asn575. Residues Asn579 to Met630 enclose the LRRCT domain. 2 cysteine pairs are disulfide-bonded: Cys583–Cys609 and Cys585–Cys628. Asn625 carries N-linked (GlcNAc...) asparagine glycosylation. The chain crosses the membrane as a helical span at residues Met633 to Tyr653. The Cytoplasmic segment spans residues Lys654–Thr841. In terms of domain architecture, TIR spans Ser673–Leu816. The interval Lys820–Thr841 is disordered. The span at Ala830 to Thr841 shows a compositional bias: polar residues.

This sequence belongs to the Toll-like receptor family. As to quaternary structure, belongs to the lipopolysaccharide (LPS) receptor, a multi-protein complex containing at least CD14, LY96 and TLR4. Binding to bacterial LPS leads to homodimerization. Interacts with LY96 via the extracellular domain. Interacts with MYD88 and TIRAP via their respective TIR domains. Interacts with TICAM2. Interacts with NOX4. Interacts with CNPY3 and HSP90B1; this interaction is required for proper folding in the endoplasmic reticulum. Interacts with MAP3K21; this interaction leads to negative regulation of TLR4 signaling. Interacts with CD36, following CD36 stimulation by oxLDL or amyloid-beta 42, and forms a heterodimer with TLR6. The trimeric complex is internalized and triggers inflammatory response. LYN kinase activity facilitates TLR4-TLR6 heterodimerization and signal initiation. Interacts with TICAM1 in response to LPS in a WDFY1-dependent manner. Interacts with WDFY1 in response to LPS. Interacts with SMPDL3B. Interacts with CEACAM1; upon lipopolysaccharide stimulation, forms a complex including TLR4 and the phosphorylated form of SYK and CEACAM1, which in turn, recruits PTPN6 that dephosphorylates SYK, reducing the production of reactive oxygen species (ROS) and lysosome disruption, which in turn, reduces the activity of the inflammasome. Interacts with RFTN1; the interaction occurs in response to lipopolysaccharide stimulation. Interacts with SCIMP; the interaction occurs in response to lipopolysaccharide stimulation and is enhanced by phosphorylation of SCIMP by LYN. This interaction facilitates the phosphorylation of TLR4 by LYN which elicits a selective cytokine response in macrophages. Interacts with TRAF3IP3. Interacts with TREM1; this interaction enhances TLR4-mediated inflammatory response. Interacts with ZG16B/PAUF. Interacts with CD82; this interaction inhibits TLR4-mediated signaling pathway. Post-translationally, phosphorylated on tyrosine residues by LYN after binding lipopolysaccharide. In terms of processing, ubiquitinated by RNF128 via 'Lys-28'-linked polyubiquitin chains, leading to proteasomal degradation.

The protein localises to the cell membrane. It localises to the early endosome. It is found in the cell projection. Its subcellular location is the ruffle. Its function is as follows. Transmembrane receptor that functions as a pattern recognition receptor recognizing pathogen- and damage-associated molecular patterns (PAMPs and DAMPs) to induce innate immune responses via downstream signaling pathways. At the plasma membrane, cooperates with LY96 to mediate the innate immune response to bacterial lipopolysaccharide (LPS). Also involved in LPS-independent inflammatory responses triggered by free fatty acids, such as palmitate, and Ni(2+). Mechanistically, acts via MYD88, TIRAP and TRAF6, leading to NF-kappa-B activation, cytokine secretion and the inflammatory response. Alternatively, CD14-mediated TLR4 internalization via endocytosis is associated with the initiation of a MYD88-independent signaling via the TICAM1-TBK1-IRF3 axis leading to type I interferon production. In addition to the secretion of proinflammatory cytokines, initiates the activation of NLRP3 inflammasome and formation of a positive feedback loop between autophagy and NF-kappa-B signaling cascade. In complex with TLR6, promotes inflammation in monocytes/macrophages by associating with TLR6 and the receptor CD86. Upon ligand binding, such as oxLDL or amyloid-beta 42, the TLR4:TLR6 complex is internalized and triggers inflammatory response, leading to NF-kappa-B-dependent production of CXCL1, CXCL2 and CCL9 cytokines, via MYD88 signaling pathway, and CCL5 cytokine, via TICAM1 signaling pathway. In myeloid dendritic cells, vesicular stomatitis virus glycoprotein G but not LPS promotes the activation of IRF7, leading to type I IFN production in a CD14-dependent manner. The polypeptide is Toll-like receptor 4 (TLR4) (Boselaphus tragocamelus (Nilgai)).